A 234-amino-acid chain; its full sequence is 2-C-methyl-D-erythritol 4-phosphate cytidylyltransferase (234 aa).

The protein belongs to the IspD/TarI cytidylyltransferase family. IspD subfamily.

The catalysed reaction is 2-C-methyl-D-erythritol 4-phosphate + CTP + H(+) = 4-CDP-2-C-methyl-D-erythritol + diphosphate. Its pathway is isoprenoid biosynthesis; isopentenyl diphosphate biosynthesis via DXP pathway; isopentenyl diphosphate from 1-deoxy-D-xylulose 5-phosphate: step 2/6. Its function is as follows. Catalyzes the formation of 4-diphosphocytidyl-2-C-methyl-D-erythritol from CTP and 2-C-methyl-D-erythritol 4-phosphate (MEP). This is 2-C-methyl-D-erythritol 4-phosphate cytidylyltransferase from Thermosynechococcus vestitus (strain NIES-2133 / IAM M-273 / BP-1).